The sequence spans 433 residues: 3-deoxy-D-manno-octulosonic acid transferase (433 aa).

Residues 11-31 (TFLYDCFLIFAFMVGLPRILY) traverse the membrane as a helical; Signal-anchor segment. Catalysis depends on Glu-70, which acts as the Proton acceptor. CMP-binding positions include 277–278 (PR), 317–319 (IGW), and 344–347 (NLLE).

This sequence belongs to the glycosyltransferase group 1 family. Glycosyltransferase 30 subfamily.

The protein localises to the cell inner membrane. It catalyses the reaction lipid IVA (E. coli) + CMP-3-deoxy-beta-D-manno-octulosonate = alpha-Kdo-(2-&gt;6)-lipid IVA (E. coli) + CMP + H(+). The enzyme catalyses alpha-Kdo-(2-&gt;6)-lipid IVA (E. coli) + CMP-3-deoxy-beta-D-manno-octulosonate = alpha-Kdo-(2-&gt;4)-alpha-Kdo-(2-&gt;6)-lipid IVA (E. coli) + CMP + H(+). The catalysed reaction is alpha-Kdo-(2-&gt;4)-alpha-Kdo-(2-&gt;6)-lipid IVA (E. coli) + CMP-3-deoxy-beta-D-manno-octulosonate = alpha-Kdo-(2-&gt;8)-alpha-Kdo-(2-&gt;4)-alpha-Kdo-(2-&gt;6)-lipid IVA (E. coli) + CMP + H(+). It carries out the reaction alpha-Kdo-(2-&gt;8)-alpha-Kdo-(2-&gt;4)-alpha-Kdo-(2-&gt;6)-lipid IVA (E. coli) + CMP-3-deoxy-beta-D-manno-octulosonate = alpha-Kdo-(2-&gt;8)-[alpha-Kdo-(2-&gt;4)]-alpha-Kdo-(2-&gt;4)-alpha-Kdo-(2-&gt;6)-lipid IVA + CMP + H(+). It participates in bacterial outer membrane biogenesis; LPS core biosynthesis. Its function is as follows. Involved in lipopolysaccharide (LPS) biosynthesis. Catalyzes the transfer of predominantly four 3-deoxy-D-manno-octulosonate (Kdo) residues from CMP-Kdo to lipid IV(A), the tetraacyldisaccharide-1,4'-bisphosphate precursor of lipid A. Thus generates the genus-specific LPS epitope of Chlamydia, composed of the trisaccharide alpha-Kdo-(2-&gt;8)-alpha-Kdo-(2-&gt;4)-alpha-Kdo. The polypeptide is 3-deoxy-D-manno-octulosonic acid transferase (waaA) (Chlamydophila psittaci (strain ATCC VR-125 / 6BC) (Chlamydia psittaci)).